Consider the following 229-residue polypeptide: Enolase-phosphatase E1 (229 aa).

The protein belongs to the HAD-like hydrolase superfamily. MasA/MtnC family. Monomer. Requires Mg(2+) as cofactor.

The enzyme catalyses 5-methylsulfanyl-2,3-dioxopentyl phosphate + H2O = 1,2-dihydroxy-5-(methylsulfanyl)pent-1-en-3-one + phosphate. It participates in amino-acid biosynthesis; L-methionine biosynthesis via salvage pathway; L-methionine from S-methyl-5-thio-alpha-D-ribose 1-phosphate: step 3/6. The protein operates within amino-acid biosynthesis; L-methionine biosynthesis via salvage pathway; L-methionine from S-methyl-5-thio-alpha-D-ribose 1-phosphate: step 4/6. Its function is as follows. Bifunctional enzyme that catalyzes the enolization of 2,3-diketo-5-methylthiopentyl-1-phosphate (DK-MTP-1-P) into the intermediate 2-hydroxy-3-keto-5-methylthiopentenyl-1-phosphate (HK-MTPenyl-1-P), which is then dephosphorylated to form the acireductone 1,2-dihydroxy-3-keto-5-methylthiopentene (DHK-MTPene). The chain is Enolase-phosphatase E1 from Serratia proteamaculans (strain 568).